Reading from the N-terminus, the 261-residue chain is Cytochrome c oxidase subunit 3 (261 aa).

Topologically, residues 1-15 (MTHQTHAYHMVNPSP) are mitochondrial matrix. Residues 16–34 (WPLTGALSALLMTSGLAMW) traverse the membrane as a helical segment. The Mitochondrial intermembrane portion of the chain corresponds to 35–40 (FHFNST). A helical transmembrane segment spans residues 41-66 (ILLMIGLTTNTLTMYQWWRDVIREST). Topologically, residues 67–72 (FQGHHT) are mitochondrial matrix. Residues 73–105 (PTVQKGLRYGMILFIISEVLFFTGFFWAFYHSS) form a helical membrane-spanning segment. The Mitochondrial intermembrane portion of the chain corresponds to 106-128 (LAPTPELGGCWPPTGIHPLNPLE). Residues 129–152 (VPLLNTSVLLASGVSITWAHHSLM) form a helical membrane-spanning segment. The Mitochondrial matrix segment spans residues 153-155 (EGN). The chain crosses the membrane as a helical span at residues 156 to 183 (RYPMLQALFITIALGVYFTLLQASEYYE). Residues 184–190 (APFTISD) are Mitochondrial intermembrane-facing. Residues 191–223 (GVYGSTFFVATGFHGLHVIIGSTFLIVCFFRQL) form a helical membrane-spanning segment. The Mitochondrial matrix segment spans residues 224–232 (KFHFTSNHH). A helical transmembrane segment spans residues 233–256 (FGFEAAAWYWHFVDVVWLFLYVSI). Topologically, residues 257–261 (YWWGS) are mitochondrial intermembrane.

The protein belongs to the cytochrome c oxidase subunit 3 family. As to quaternary structure, component of the cytochrome c oxidase (complex IV, CIV), a multisubunit enzyme composed of 14 subunits. The complex is composed of a catalytic core of 3 subunits MT-CO1, MT-CO2 and MT-CO3, encoded in the mitochondrial DNA, and 11 supernumerary subunits COX4I, COX5A, COX5B, COX6A, COX6B, COX6C, COX7A, COX7B, COX7C, COX8 and NDUFA4, which are encoded in the nuclear genome. The complex exists as a monomer or a dimer and forms supercomplexes (SCs) in the inner mitochondrial membrane with NADH-ubiquinone oxidoreductase (complex I, CI) and ubiquinol-cytochrome c oxidoreductase (cytochrome b-c1 complex, complex III, CIII), resulting in different assemblies (supercomplex SCI(1)III(2)IV(1) and megacomplex MCI(2)III(2)IV(2)).

The protein localises to the mitochondrion inner membrane. It carries out the reaction 4 Fe(II)-[cytochrome c] + O2 + 8 H(+)(in) = 4 Fe(III)-[cytochrome c] + 2 H2O + 4 H(+)(out). Its function is as follows. Component of the cytochrome c oxidase, the last enzyme in the mitochondrial electron transport chain which drives oxidative phosphorylation. The respiratory chain contains 3 multisubunit complexes succinate dehydrogenase (complex II, CII), ubiquinol-cytochrome c oxidoreductase (cytochrome b-c1 complex, complex III, CIII) and cytochrome c oxidase (complex IV, CIV), that cooperate to transfer electrons derived from NADH and succinate to molecular oxygen, creating an electrochemical gradient over the inner membrane that drives transmembrane transport and the ATP synthase. Cytochrome c oxidase is the component of the respiratory chain that catalyzes the reduction of oxygen to water. Electrons originating from reduced cytochrome c in the intermembrane space (IMS) are transferred via the dinuclear copper A center (CU(A)) of subunit 2 and heme A of subunit 1 to the active site in subunit 1, a binuclear center (BNC) formed by heme A3 and copper B (CU(B)). The BNC reduces molecular oxygen to 2 water molecules using 4 electrons from cytochrome c in the IMS and 4 protons from the mitochondrial matrix. This chain is Cytochrome c oxidase subunit 3 (MT-CO3), found in Raphicerus campestris (Steenbok).